The sequence spans 504 residues: uncharacterized protein (504 aa).

This is an uncharacterized protein from Klebsiella pneumoniae.